The following is a 31-amino-acid chain: leu operon leader peptide (31 aa).

Involved in control of the biosynthesis of leucine. This Buchnera aphidicola subsp. Rhopalosiphum padi protein is leu operon leader peptide (leuL).